A 501-amino-acid polypeptide reads, in one-letter code: 2,3-bisphosphoglycerate-independent phosphoglycerate mutase (501 aa).

Positions 12 and 62 each coordinate Mn(2+). Catalysis depends on Ser62, which acts as the Phosphoserine intermediate. Substrate is bound by residues His121, 150-151 (RD), Arg182, Arg188, 253-256 (RSDR), and Lys322. Mn(2+)-binding residues include Asp389, His393, Asp430, His431, and His449.

The protein belongs to the BPG-independent phosphoglycerate mutase family. Monomer. Mn(2+) serves as cofactor.

The enzyme catalyses (2R)-2-phosphoglycerate = (2R)-3-phosphoglycerate. The protein operates within carbohydrate degradation; glycolysis; pyruvate from D-glyceraldehyde 3-phosphate: step 3/5. Catalyzes the interconversion of 2-phosphoglycerate and 3-phosphoglycerate. This chain is 2,3-bisphosphoglycerate-independent phosphoglycerate mutase, found in Ehrlichia ruminantium (strain Welgevonden).